Consider the following 243-residue polypeptide: Putative glycerophosphodiester phosphodiesterase YhdW (243 aa).

The GP-PDE domain maps to 1 to 238 (MYIIAHRGAS…DYPDFIIKDG (238 aa)). The Proton acceptor role is filled by His6. Ca(2+)-binding residues include Glu33 and Asp35. His48 serves as the catalytic Proton donor. Residue Glu107 participates in Ca(2+) binding.

It belongs to the glycerophosphoryl diester phosphodiesterase family. It depends on Ca(2+) as a cofactor.

The catalysed reaction is a sn-glycero-3-phosphodiester + H2O = an alcohol + sn-glycerol 3-phosphate + H(+). Glycerophosphodiester phosphodiesterase hydrolyzes glycerophosphodiesters into glycerol-3-phosphate (G3P) and the corresponding alcohol. In Bacillus subtilis (strain 168), this protein is Putative glycerophosphodiester phosphodiesterase YhdW (yhdW).